The chain runs to 446 residues: ATP synthase subunit b-delta (446 aa).

Positions 1 to 168 are ATP synthase subunit b; the sequence is MSTFIGQLFG…PATADVDYPL (168 aa). Residues 4–24 traverse the membrane as a helical segment; the sequence is FIGQLFGFAVIVYLVWRFIVP. Positions 169-446 are ATP synthase subunit delta; that stretch reads LAKMRSASRR…LAAAEARLPD (278 aa).

The protein in the N-terminal section; belongs to the ATPase B chain family. This sequence in the C-terminal section; belongs to the ATPase delta chain family. F-type ATPases have 2 components, F(1) - the catalytic core - and F(0) - the membrane proton channel. F(1) has five subunits: alpha(3), beta(3), gamma(1), delta(1), epsilon(1). F(0) has three main subunits: a(1), b(2) and c(10-14). The alpha and beta chains form an alternating ring which encloses part of the gamma chain. F(1) is attached to F(0) by a central stalk formed by the gamma and epsilon chains, while a peripheral stalk is formed by the delta and b chains.

It is found in the cell membrane. Functionally, f(1)F(0) ATP synthase produces ATP from ADP in the presence of a proton or sodium gradient. F-type ATPases consist of two structural domains, F(1) containing the extramembraneous catalytic core and F(0) containing the membrane proton channel, linked together by a central stalk and a peripheral stalk. During catalysis, ATP synthesis in the catalytic domain of F(1) is coupled via a rotary mechanism of the central stalk subunits to proton translocation. In terms of biological role, this fusion protein includes a component of the F(0) channel (subunit b) and of the F(1) subunit (subunit delta). Two copies of subunit b and one of delta together form the peripheral 'stator' stalk which links F(1) to F(0). This Mycobacterium bovis (strain ATCC BAA-935 / AF2122/97) protein is ATP synthase subunit b-delta (atpFH).